The primary structure comprises 369 residues: S-(hydroxymethyl)glutathione dehydrogenase (369 aa).

Cys40, His62, Cys92, Cys95, Cys98, Cys106, and Cys169 together coordinate Zn(2+).

This sequence belongs to the zinc-containing alcohol dehydrogenase family. Class-III subfamily. Homodimer. Requires Zn(2+) as cofactor.

Its subcellular location is the cytoplasm. The enzyme catalyses S-(hydroxymethyl)glutathione + NADP(+) = S-formylglutathione + NADPH + H(+). It catalyses the reaction S-(hydroxymethyl)glutathione + NAD(+) = S-formylglutathione + NADH + H(+). It carries out the reaction a primary alcohol + NAD(+) = an aldehyde + NADH + H(+). The catalysed reaction is a secondary alcohol + NAD(+) = a ketone + NADH + H(+). The enzyme catalyses S-nitrosoglutathione + NADH + H(+) = S-(hydroxysulfenamide)glutathione + NAD(+). Has high formaldehyde dehydrogenase activity in the presence of glutathione and catalyzes the oxidation of normal alcohols in a reaction that is not GSH-dependent. In addition, hemithiolacetals other than those formed from GSH, including omega-thiol fatty acids, also are substrates. Also acts as a S-nitroso-glutathione reductase by catalyzing the NADH-dependent reduction of S-nitrosoglutathione. This chain is S-(hydroxymethyl)glutathione dehydrogenase (frmA), found in Escherichia coli O1:K1 / APEC.